Reading from the N-terminus, the 565-residue chain is CTP synthase (565 aa).

An amidoligase domain region spans residues 1–272 (MARPKNVKHI…DLRVMKKLGL (272 aa)). CTP is bound at residue serine 18. Serine 18 contributes to the UTP binding site. 19–24 (SLGKGI) contributes to the ATP binding site. Tyrosine 59 serves as a coordination point for L-glutamine. Aspartate 76 contributes to the ATP binding site. 2 residues coordinate Mg(2+): aspartate 76 and glutamate 146. Residues 153–155 (DIE), 193–198 (KTKPTQ), and lysine 229 contribute to the CTP site. Residues 193-198 (KTKPTQ) and lysine 229 contribute to the UTP site. The Glutamine amidotransferase type-1 domain maps to 299–543 (TIGVCGKYTE…VQAAKEFAMG (245 aa)). Glycine 363 is a binding site for L-glutamine. Cysteine 390 acts as the Nucleophile; for glutamine hydrolysis in catalysis. L-glutamine-binding positions include 391–394 (LGMQ), glutamate 414, and arginine 471. Catalysis depends on residues histidine 516 and glutamate 518.

Belongs to the CTP synthase family. As to quaternary structure, homotetramer.

The catalysed reaction is UTP + L-glutamine + ATP + H2O = CTP + L-glutamate + ADP + phosphate + 2 H(+). The enzyme catalyses L-glutamine + H2O = L-glutamate + NH4(+). It catalyses the reaction UTP + NH4(+) + ATP = CTP + ADP + phosphate + 2 H(+). The protein operates within pyrimidine metabolism; CTP biosynthesis via de novo pathway; CTP from UDP: step 2/2. Allosterically activated by GTP, when glutamine is the substrate; GTP has no effect on the reaction when ammonia is the substrate. The allosteric effector GTP functions by stabilizing the protein conformation that binds the tetrahedral intermediate(s) formed during glutamine hydrolysis. Inhibited by the product CTP, via allosteric rather than competitive inhibition. Catalyzes the ATP-dependent amination of UTP to CTP with either L-glutamine or ammonia as the source of nitrogen. Regulates intracellular CTP levels through interactions with the four ribonucleotide triphosphates. The polypeptide is CTP synthase (Chlorobaculum parvum (strain DSM 263 / NCIMB 8327) (Chlorobium vibrioforme subsp. thiosulfatophilum)).